Here is a 229-residue protein sequence, read N- to C-terminus: Ribonuclease 3 (229 aa).

The region spanning 5–127 (LSRLERQLGY…LIGAIYLDAG (123 aa)) is the RNase III domain. A Mg(2+)-binding site is contributed by E40. D44 is an active-site residue. Mg(2+) is bound by residues D113 and E116. Residue E116 is part of the active site. The DRBM domain maps to 154 to 224 (DPKTRLQEFL…AAAALIALGV (71 aa)).

It belongs to the ribonuclease III family. As to quaternary structure, homodimer. Mg(2+) serves as cofactor.

It is found in the cytoplasm. The enzyme catalyses Endonucleolytic cleavage to 5'-phosphomonoester.. Digests double-stranded RNA. Involved in the processing of primary rRNA transcript to yield the immediate precursors to the large and small rRNAs (23S and 16S). Processes some mRNAs, and tRNAs when they are encoded in the rRNA operon. Processes pre-crRNA and tracrRNA of type II CRISPR loci if present in the organism. The sequence is that of Ribonuclease 3 from Pseudomonas fluorescens (strain ATCC BAA-477 / NRRL B-23932 / Pf-5).